The sequence spans 176 residues: Transcription factor E (176 aa).

In terms of domain architecture, HTH TFE/IIEalpha-type spans 5–89 (IDQLMKDMAR…YWKANVDQIN (85 aa)).

The protein belongs to the TFE family. Monomer. Interaction with RNA polymerase subunits RpoF and RpoE is necessary for Tfe stimulatory transcription activity. Able to interact with Tbp and RNA polymerase in the absence of DNA promoter. Interacts both with the preinitiation and elongation complexes.

Its function is as follows. Transcription factor that plays a role in the activation of archaeal genes transcribed by RNA polymerase. Facilitates transcription initiation by enhancing TATA-box recognition by TATA-box-binding protein (Tbp), and transcription factor B (Tfb) and RNA polymerase recruitment. Not absolutely required for transcription in vitro, but particularly important in cases where Tbp or Tfb function is not optimal. It dynamically alters the nucleic acid-binding properties of RNA polymerases by stabilizing the initiation complex and destabilizing elongation complexes. Seems to translocate with the RNA polymerase following initiation and acts by binding to the non template strand of the transcription bubble in elongation complexes. This chain is Transcription factor E, found in Metallosphaera sedula (strain ATCC 51363 / DSM 5348 / JCM 9185 / NBRC 15509 / TH2).